The following is a 155-amino-acid chain: MYKIQLLSCIALTLALVANGAPTSSSTGNTMKEVKSLLLDLQLLLEKVKNPENLKLSRMHTFDFYVPKVNATELKHLKCLLEELKLLEEVLNLAPSKNLNPREIKDSMDNIKRIVLELQGSETRFTCEYDDATVNAVEFLNKWITFCQSIYSTMT.

A signal peptide spans Met-1–Gly-20. O-linked (GalNAc...) threonine glycosylation occurs at Thr-23. Cys-79 and Cys-127 are oxidised to a cystine.

It belongs to the IL-2 family.

The protein resides in the secreted. Its function is as follows. Cytokine produced by activated CD4-positive helper T-cells and to a lesser extend activated CD8-positive T-cells and natural killer (NK) cells that plays pivotal roles in the immune response and tolerance. Binds to a receptor complex composed of either the high-affinity trimeric IL-2R (IL2RA/CD25, IL2RB/CD122 and IL2RG/CD132) or the low-affinity dimeric IL-2R (IL2RB and IL2RG). Interaction with the receptor leads to oligomerization and conformation changes in the IL-2R subunits resulting in downstream signaling starting with phosphorylation of JAK1 and JAK3. In turn, JAK1 and JAK3 phosphorylate the receptor to form a docking site leading to the phosphorylation of several substrates including STAT5. This process leads to activation of several pathways including STAT, phosphoinositide-3-kinase/PI3K and mitogen-activated protein kinase/MAPK pathways. Functions as a T-cell growth factor and can increase NK-cell cytolytic activity as well. Promotes strong proliferation of activated B-cells and subsequently immunoglobulin production. Plays a pivotal role in regulating the adaptive immune system by controlling the survival and proliferation of regulatory T-cells, which are required for the maintenance of immune tolerance. Moreover, participates in the differentiation and homeostasis of effector T-cell subsets, including Th1, Th2, Th17 as well as memory CD8-positive T-cells. The polypeptide is Interleukin-2 (IL2) (Bos taurus (Bovine)).